A 187-amino-acid polypeptide reads, in one-letter code: Large ribosomal subunit protein uL5 (187 aa).

The protein belongs to the universal ribosomal protein uL5 family. As to quaternary structure, part of the 50S ribosomal subunit; part of the 5S rRNA/L5/L18/L25 subcomplex. Contacts the 5S rRNA and the P site tRNA. Forms a bridge to the 30S subunit in the 70S ribosome.

Functionally, this is one of the proteins that bind and probably mediate the attachment of the 5S RNA into the large ribosomal subunit, where it forms part of the central protuberance. In the 70S ribosome it contacts protein S13 of the 30S subunit (bridge B1b), connecting the 2 subunits; this bridge is implicated in subunit movement. Contacts the P site tRNA; the 5S rRNA and some of its associated proteins might help stabilize positioning of ribosome-bound tRNAs. This is Large ribosomal subunit protein uL5 from Mycobacterium bovis (strain ATCC BAA-935 / AF2122/97).